We begin with the raw amino-acid sequence, 236 residues long: 6-carboxyhexanoate--CoA ligase (236 aa).

Belongs to the BioW family. Homodimer. Mg(2+) is required as a cofactor.

It catalyses the reaction heptanedioate + ATP + CoA = 6-carboxyhexanoyl-CoA + AMP + diphosphate. The protein operates within metabolic intermediate metabolism; pimeloyl-CoA biosynthesis; pimeloyl-CoA from pimelate: step 1/1. Its function is as follows. Catalyzes the transformation of pimelate into pimeloyl-CoA with concomitant hydrolysis of ATP to AMP. In Methanococcus aeolicus (strain ATCC BAA-1280 / DSM 17508 / OCM 812 / Nankai-3), this protein is 6-carboxyhexanoate--CoA ligase.